Consider the following 604-residue polypeptide: Glutamine--fructose-6-phosphate aminotransferase [isomerizing] (604 aa).

Cys-2 acts as the Nucleophile; for GATase activity in catalysis. Residues 2 to 219 (CGIMGAVSER…EGDSACVTTQ (218 aa)) form the Glutamine amidotransferase type-2 domain. SIS domains lie at 279–427 (LRAS…DNRA) and 454–594 (LASL…VDQP). Lys-599 acts as the For Fru-6P isomerization activity in catalysis.

As to quaternary structure, homodimer.

It is found in the cytoplasm. The catalysed reaction is D-fructose 6-phosphate + L-glutamine = D-glucosamine 6-phosphate + L-glutamate. Catalyzes the first step in hexosamine metabolism, converting fructose-6P into glucosamine-6P using glutamine as a nitrogen source. This is Glutamine--fructose-6-phosphate aminotransferase [isomerizing] from Legionella pneumophila (strain Lens).